A 317-amino-acid polypeptide reads, in one-letter code: Beta-ketoacyl-[acyl-carrier-protein] synthase III (317 aa).

Active-site residues include Cys-112 and His-244. The interval 245–249 is ACP-binding; the sequence is QANLR. Residue Asn-274 is part of the active site.

The protein belongs to the thiolase-like superfamily. FabH family. In terms of assembly, homodimer.

It localises to the cytoplasm. It catalyses the reaction malonyl-[ACP] + acetyl-CoA + H(+) = 3-oxobutanoyl-[ACP] + CO2 + CoA. It functions in the pathway lipid metabolism; fatty acid biosynthesis. In terms of biological role, catalyzes the condensation reaction of fatty acid synthesis by the addition to an acyl acceptor of two carbons from malonyl-ACP. Catalyzes the first condensation reaction which initiates fatty acid synthesis and may therefore play a role in governing the total rate of fatty acid production. Possesses both acetoacetyl-ACP synthase and acetyl transacylase activities. Its substrate specificity determines the biosynthesis of branched-chain and/or straight-chain of fatty acids. This is Beta-ketoacyl-[acyl-carrier-protein] synthase III from Salmonella paratyphi A (strain ATCC 9150 / SARB42).